We begin with the raw amino-acid sequence, 87 residues long: MAKGQSLQDPFLNTLRRERIPVSIYLVNGIKLQGYIESFDQFVILLKNSISQMIYKHAISTVVPNHTNNQEHNQSQYNNNNACISKP.

In terms of domain architecture, Sm spans Asp-9–Asn-68. The tract at residues His-66–Pro-87 is disordered.

It belongs to the Hfq family. As to quaternary structure, homohexamer.

In terms of biological role, RNA chaperone that binds small regulatory RNA (sRNAs) and mRNAs to facilitate mRNA translational regulation in response to envelope stress, environmental stress and changes in metabolite concentrations. Also binds with high specificity to tRNAs. The sequence is that of RNA-binding protein Hfq from Wigglesworthia glossinidia brevipalpis.